The primary structure comprises 295 residues: Glutamate 5-kinase (295 aa).

Lys-9 lines the ATP pocket. Residues Ser-49, Asp-136, and Asn-148 each coordinate substrate. Residues 168-169 (TD) and 210-216 (TGGMLTK) contribute to the ATP site.

Belongs to the glutamate 5-kinase family.

The protein localises to the cytoplasm. The catalysed reaction is L-glutamate + ATP = L-glutamyl 5-phosphate + ADP. It functions in the pathway amino-acid biosynthesis; L-proline biosynthesis; L-glutamate 5-semialdehyde from L-glutamate: step 1/2. In terms of biological role, catalyzes the transfer of a phosphate group to glutamate to form L-glutamate 5-phosphate. The chain is Glutamate 5-kinase from Neisseria gonorrhoeae (strain NCCP11945).